The chain runs to 700 residues: Elongation factor G (700 aa).

Positions 10-286 constitute a tr-type G domain; the sequence is KKVRNIGIMA…AVIDYLPSPL (277 aa). GTP is bound by residues 19-26, 83-87, and 137-140; these read AHIDAGKT, DTPGH, and NKMD.

The protein belongs to the TRAFAC class translation factor GTPase superfamily. Classic translation factor GTPase family. EF-G/EF-2 subfamily.

It localises to the cytoplasm. Functionally, catalyzes the GTP-dependent ribosomal translocation step during translation elongation. During this step, the ribosome changes from the pre-translocational (PRE) to the post-translocational (POST) state as the newly formed A-site-bound peptidyl-tRNA and P-site-bound deacylated tRNA move to the P and E sites, respectively. Catalyzes the coordinated movement of the two tRNA molecules, the mRNA and conformational changes in the ribosome. In Nocardia farcinica (strain IFM 10152), this protein is Elongation factor G.